We begin with the raw amino-acid sequence, 345 residues long: MVTTLQLTRPDDWHLHLRDGKMLTDIVPATGRRFARAIIMPNLRPPITTTTQALAYRKRILAAQPKNLDFEPLMTLYLTDNTIPEEITRARDSGHIYAVKLYPAGATTNADFGVTCLHKLYPVLEALQQQQLPLLIHGEVTDPAVDIFDRERVFIESHLIPLLHDFPALRVVLEHITTQEAVDFIEAAPPNIAATITPHHLLFNRNALLAGGIQPHYYCLPVLKREIHRQALVAAATSGNPKFFLGTDSAPHAKTAKETACGCAGIYSSHAALELYAEAFEEASALEKLEAFASFHGPDFYGLPRNQDTVTLIKTPWQVPESLPYGDDALIPLRGGTTVAWRLAE.

Residues histidine 14 and histidine 16 each coordinate Zn(2+). Substrate is bound by residues 16–18 (HLR) and asparagine 42. Positions 100, 137, and 175 each coordinate Zn(2+). Lysine 100 is subject to N6-carboxylysine. Residue histidine 137 coordinates substrate. Residue leucine 220 participates in substrate binding. Aspartate 248 contributes to the Zn(2+) binding site. Aspartate 248 is an active-site residue. Substrate-binding residues include histidine 252 and alanine 264.

Belongs to the metallo-dependent hydrolases superfamily. DHOase family. Class II DHOase subfamily. As to quaternary structure, homodimer. Requires Zn(2+) as cofactor.

The enzyme catalyses (S)-dihydroorotate + H2O = N-carbamoyl-L-aspartate + H(+). Its pathway is pyrimidine metabolism; UMP biosynthesis via de novo pathway; (S)-dihydroorotate from bicarbonate: step 3/3. Functionally, catalyzes the reversible cyclization of carbamoyl aspartate to dihydroorotate. This is Dihydroorotase from Nitrosococcus oceani (strain ATCC 19707 / BCRC 17464 / JCM 30415 / NCIMB 11848 / C-107).